The primary structure comprises 464 residues: Uronate isomerase (464 aa).

This sequence belongs to the metallo-dependent hydrolases superfamily. Uronate isomerase family.

It catalyses the reaction D-glucuronate = D-fructuronate. The catalysed reaction is aldehydo-D-galacturonate = keto-D-tagaturonate. It functions in the pathway carbohydrate metabolism; pentose and glucuronate interconversion. The chain is Uronate isomerase from Caldicellulosiruptor bescii (strain ATCC BAA-1888 / DSM 6725 / KCTC 15123 / Z-1320) (Anaerocellum thermophilum).